The sequence spans 222 residues: UPF0758 protein YicR (222 aa).

In terms of domain architecture, MPN spans 100-222 (PLLSPEMTRE…YVSFAERGWI (123 aa)). His171, His173, and Asp184 together coordinate Zn(2+). The JAMM motif signature appears at 171 to 184 (HNHPSGCAEPSKAD).

This sequence belongs to the UPF0758 family. YicR subfamily.

The sequence is that of UPF0758 protein YicR from Escherichia coli O81 (strain ED1a).